We begin with the raw amino-acid sequence, 753 residues long: Inactive protein-tyrosine phosphatase egg-4 (753 aa).

Disordered regions lie at residues 26-46 (TSLQ…STDN) and 75-145 (SFRK…SGHG). Positions 35–46 (NTDDSSADSTDN) are enriched in low complexity. Basic and acidic residues-rich tracts occupy residues 84 to 94 (AQKDRRSKERL) and 129 to 145 (VSEK…SGHG). In terms of domain architecture, Tyrosine-protein phosphatase spans 408-661 (MERRFEILEN…IFVHRLVAFF (254 aa)).

It belongs to the protein-tyrosine phosphatase family. In terms of assembly, part of a complex, consisting of pseudophosphatases egg-3, egg-4, egg-5 and kinase mbk-2; this complex is required for the oocyte-to-zygote transition. Interacts (via tyrosine-protein phosphatase domain) with kinase mbk-2 (via 'Tyr-619' and 'Tyr-621'); mbk-2 tyrosine phosphorylation enhances the interaction. The interaction inhibits mbk-2 kinase activity and is required for mbk-2 oocyte cortex localization. Interacts with egg-3.

It localises to the cytoplasm. The protein resides in the cell cortex. Functionally, inactive phosphatase which acts redundantly with egg-5 in the oocyte-to-zygote transition. Required for the polarization of cortical actin cytoskeleton rearrangement in the oocyte before and after fertilization. Together with egg-5, required for the cortical localization of kinase mbk-2 and for the inhibition of mbk-2 kinase activity in maturing oocyte until the end of meiosis I. Also required for kinase mbk-2, pseudophosphatase egg-3 and chitin synthase chs-1 localization to cytoplasmic foci after fertilization. The chain is Inactive protein-tyrosine phosphatase egg-4 from Caenorhabditis elegans.